A 1169-amino-acid chain; its full sequence is Chromosome partition protein Smc (1169 aa).

32–39 (PNGCGKSN) is an ATP binding site. 2 coiled-coil regions span residues 170 to 507 (ISKY…ALGE) and 659 to 1030 (REQQ…FQSL).

The protein belongs to the SMC family. Homodimer.

It localises to the cytoplasm. Functionally, required for chromosome condensation and partitioning. In Coxiella burnetii (strain RSA 493 / Nine Mile phase I), this protein is Chromosome partition protein Smc.